Consider the following 211-residue polypeptide: Probable nicotinate-nucleotide adenylyltransferase (211 aa).

This sequence belongs to the NadD family.

The enzyme catalyses nicotinate beta-D-ribonucleotide + ATP + H(+) = deamido-NAD(+) + diphosphate. It participates in cofactor biosynthesis; NAD(+) biosynthesis; deamido-NAD(+) from nicotinate D-ribonucleotide: step 1/1. In terms of biological role, catalyzes the reversible adenylation of nicotinate mononucleotide (NaMN) to nicotinic acid adenine dinucleotide (NaAD). The protein is Probable nicotinate-nucleotide adenylyltransferase of Corynebacterium kroppenstedtii (strain DSM 44385 / JCM 11950 / CIP 105744 / CCUG 35717).